Consider the following 305-residue polypeptide: Diacylglycerol kinase (305 aa).

The DAGKc domain occupies 1–132 (MRKRARIIYN…VDIGKMNSRY (132 aa)). Residues 10 to 14 (NPTSG), threonine 41, 67 to 73 (GDGTLNE), and threonine 94 each bind ATP. Residues lysine 213, aspartate 216, and tyrosine 218 each coordinate Mg(2+). Glutamate 273 (proton acceptor) is an active-site residue.

Belongs to the diacylglycerol/lipid kinase family. As to quaternary structure, homodimer. Mg(2+) is required as a cofactor.

The enzyme catalyses a 1,2-diacyl-sn-glycerol + ATP = a 1,2-diacyl-sn-glycero-3-phosphate + ADP + H(+). Functionally, catalyzes the phosphorylation of diacylglycerol (DAG) into phosphatidic acid. Is a key enzyme involved in the production of lipoteichoic acid by reintroducing DAG formed from the breakdown of membrane phospholipids into the phosphatidylglycerol biosynthetic pathway. This is Diacylglycerol kinase (dagK) from Staphylococcus saprophyticus subsp. saprophyticus (strain ATCC 15305 / DSM 20229 / NCIMB 8711 / NCTC 7292 / S-41).